Consider the following 300-residue polypeptide: Uricase (300 aa).

A2 carries the post-translational modification N-acetylalanine. N6-acetyllysine; alternate occurs at positions 6 and 19. N6-succinyllysine; alternate is present on residues K6 and K19. K19 (charge relay system) is an active-site residue. Residues K23 and K32 each carry the N6-acetyllysine modification. A phosphoserine mark is found at S35 and S59. Catalysis depends on T64, which acts as the Charge relay system. Urate contacts are provided by T64 and D65. Residues K114, K118, and K160 each carry the N6-acetyllysine modification. Residue F166 participates in urate binding. N6-acetyllysine occurs at positions 171 and 181. Position 183 (R183) interacts with urate. An N6-acetyllysine; alternate mark is found at K217 and K224. N6-succinyllysine; alternate occurs at positions 217 and 224. S228 bears the Phosphoserine mark. Positions 231, 232, and 258 each coordinate urate. The active-site Charge relay system is the H260. Residue K274 is modified to N6-acetyllysine. Residue Y285 is modified to Phosphotyrosine. Positions 298–300 match the Microbody targeting signal motif; the sequence is SRL.

It belongs to the uricase family.

It localises to the peroxisome. It catalyses the reaction urate + O2 + H2O = 5-hydroxyisourate + H2O2. It functions in the pathway purine metabolism; urate degradation; (S)-allantoin from urate: step 1/3. Functionally, catalyzes the oxidation of uric acid to 5-hydroxyisourate, which is further processed to form (S)-allantoin. The sequence is that of Uricase (UOX) from Oryctolagus cuniculus (Rabbit).